A 268-amino-acid chain; its full sequence is MKGKTVSAALVGKLIALSVGVVACTQVKDETVGVGVLSEPHARLLEIAKEEVKKQHIELRIVEFTNYVALNEAVMRGDILMNFFQHVPHMQQFNQEHNGDLVSVGNVHVEPLALYSRTYRHVSDFPAGAVIAIPNDSSNEARALRLLEAAGFIRMRAGSGLFATVEDVQQNVRNVVLQEVESALLPRVFDQVDGAVINGNYAIMAGLSARRDGLAVEPDASAYANVLVVKRGNEADARVQAVLRALCGGRVRTYLKERYKGGEVAPAL.

A signal peptide spans 1–23 (MKGKTVSAALVGKLIALSVGVVA). Residue Cys-24 is the site of N-palmitoyl cysteine attachment. Residue Cys-24 is the site of S-diacylglycerol cysteine attachment.

This sequence belongs to the NlpA lipoprotein family.

The protein resides in the cell membrane. The protein is Membrane lipoprotein TpN32 (tpn32) of Treponema pallidum (strain Nichols).